Reading from the N-terminus, the 185-residue chain is Shikimate kinase (185 aa).

ATP is bound at residue 21-26; it reads GVGKTT. Thr-25 is a Mg(2+) binding site. Substrate contacts are provided by Asp-43, Arg-67, and Gly-90. Arg-129 provides a ligand contact to ATP. Arg-147 is a substrate binding site.

The protein belongs to the shikimate kinase family. As to quaternary structure, monomer. Mg(2+) serves as cofactor.

The protein localises to the cytoplasm. The enzyme catalyses shikimate + ATP = 3-phosphoshikimate + ADP + H(+). It participates in metabolic intermediate biosynthesis; chorismate biosynthesis; chorismate from D-erythrose 4-phosphate and phosphoenolpyruvate: step 5/7. Its function is as follows. Catalyzes the specific phosphorylation of the 3-hydroxyl group of shikimic acid using ATP as a cosubstrate. This is Shikimate kinase from Bacillus pumilus (strain SAFR-032).